The primary structure comprises 293 residues: Xyloglucan endotransglucosylase/hydrolase protein 31 (293 aa).

The N-terminal stretch at 1-20 (MALSLIFLALLVLCPSSGHS) is a signal peptide. The region spanning 29–230 (YPSSRVPTSP…YRYQPFVAKY (202 aa)) is the GH16 domain. Catalysis depends on Glu114, which acts as the Nucleophile. The active-site Proton donor is the Glu118. Xyloglucan contacts are provided by residues Glu118, 131 to 133 (QTN), 141 to 148 (DRNVIGRE), and 209 to 210 (DW). Cystine bridges form between Cys238–Cys246 and Cys280–Cys293. Residue Arg285 participates in xyloglucan binding.

This sequence belongs to the glycosyl hydrolase 16 family. XTH group 3 subfamily. Interacts with XTH17. The formation of an XTH17-XTH31 dimer may be required for XET activity. Contains at least one intrachain disulfide bond essential for its enzymatic activity. As to expression, predominantly expressed in root. Weakly expressed in influorescence stems. Expressed in root tips and elongation zones, stems, young leaves, flowers and siliques. Expressed in root, hypocotyl, and etiolated whole seedlings.

Its subcellular location is the secreted. It is found in the cell wall. The protein localises to the extracellular space. It localises to the apoplast. The protein resides in the cell membrane. It catalyses the reaction breaks a beta-(1-&gt;4) bond in the backbone of a xyloglucan and transfers the xyloglucanyl segment on to O-4 of the non-reducing terminal glucose residue of an acceptor, which can be a xyloglucan or an oligosaccharide of xyloglucan.. The enzyme catalyses xyloglucan + H2O = xyloglucan oligosaccharides.. Its function is as follows. Catalyzes xyloglucan endohydrolysis (XEH) and/or endotransglycosylation (XET). Cleaves and religates xyloglucan polymers, an essential constituent of the primary cell wall, and thereby participates in cell wall construction of growing tissues. Involved in the accumulation of hemicelluloses. Has a high XEH activity and only a slight XET activity in vitro, but the main in planta activity seems to be XET, thus controlling aluminum sensitivity. Acceptor preferences are XXXGol = XXFGol &gt; XXLGol &gt; XLLGol = XLFGol. The protein is Xyloglucan endotransglucosylase/hydrolase protein 31 of Arabidopsis thaliana (Mouse-ear cress).